Here is a 416-residue protein sequence, read N- to C-terminus: Xyloglucan O-acetyltransferase 1 (416 aa).

Residues 1–14 are Cytoplasmic-facing; the sequence is MGLNEQQNVPSQRK. A helical; Signal-anchor for type II membrane protein transmembrane segment spans residues 15–35; that stretch reads IIVFIVLAFIPIALFRLCFNN. Residues 36–416 lie on the Lumenal side of the membrane; the sequence is PFSSIKDTSL…MIEMLRRWKV (381 aa). 4 cysteine pairs are disulfide-bonded: Cys-79–Cys-129, Cys-100–Cys-165, Cys-109–Cys-395, and Cys-318–Cys-391. A glycan (N-linked (GlcNAc...) asparagine) is linked at Asn-96. The GDS motif motif lies at 152–154; sequence GDS. Ser-154 serves as the catalytic Nucleophile. Residues Asn-194, Asn-269, and Asn-319 are each glycosylated (N-linked (GlcNAc...) asparagine). Asp-390 functions as the Proton donor in the catalytic mechanism. A DXXH motif motif is present at residues 390-393; the sequence is DCLH. His-393 acts as the Proton acceptor in catalysis.

Belongs to the PC-esterase family. TBL subfamily.

The protein resides in the golgi apparatus membrane. Functionally, xyloglucan acetyltransferase that catalyzes the acetylation of fucosylated Gal residues on xyloglucan side chains. Predominantly catalyze 6-O-monoacetylation of Gal residues in the Fuc-Gal-Xyl trisaccharide side chains of xyloglucan oligomers. Involved in xyloglucan specific O-acetylation in roots and rosette leaves. This is Xyloglucan O-acetyltransferase 1 from Arabidopsis thaliana (Mouse-ear cress).